We begin with the raw amino-acid sequence, 272 residues long: GTP cyclohydrolase FolE2 (272 aa).

It belongs to the GTP cyclohydrolase IV family.

The catalysed reaction is GTP + H2O = 7,8-dihydroneopterin 3'-triphosphate + formate + H(+). It participates in cofactor biosynthesis; 7,8-dihydroneopterin triphosphate biosynthesis; 7,8-dihydroneopterin triphosphate from GTP: step 1/1. Its function is as follows. Converts GTP to 7,8-dihydroneopterin triphosphate. This Aromatoleum aromaticum (strain DSM 19018 / LMG 30748 / EbN1) (Azoarcus sp. (strain EbN1)) protein is GTP cyclohydrolase FolE2.